The following is a 427-amino-acid chain: Serine--tRNA ligase (427 aa).

Position 231–233 (231–233) interacts with L-serine; the sequence is TAE. Position 262–264 (262–264) interacts with ATP; that stretch reads RSE. Glu285 provides a ligand contact to L-serine. Residue 349-352 coordinates ATP; the sequence is EISS. Ser385 is a binding site for L-serine.

This sequence belongs to the class-II aminoacyl-tRNA synthetase family. Type-1 seryl-tRNA synthetase subfamily. In terms of assembly, homodimer. The tRNA molecule binds across the dimer.

It is found in the cytoplasm. The enzyme catalyses tRNA(Ser) + L-serine + ATP = L-seryl-tRNA(Ser) + AMP + diphosphate + H(+). The catalysed reaction is tRNA(Sec) + L-serine + ATP = L-seryl-tRNA(Sec) + AMP + diphosphate + H(+). It functions in the pathway aminoacyl-tRNA biosynthesis; selenocysteinyl-tRNA(Sec) biosynthesis; L-seryl-tRNA(Sec) from L-serine and tRNA(Sec): step 1/1. In terms of biological role, catalyzes the attachment of serine to tRNA(Ser). Is also able to aminoacylate tRNA(Sec) with serine, to form the misacylated tRNA L-seryl-tRNA(Sec), which will be further converted into selenocysteinyl-tRNA(Sec). In Rhizobium rhizogenes (strain K84 / ATCC BAA-868) (Agrobacterium radiobacter), this protein is Serine--tRNA ligase.